Consider the following 239-residue polypeptide: Putative transcriptional regulator of 2-aminoethylphosphonate degradation operons (239 aa).

The HTH gntR-type domain occupies 8-76 (IPQYLLIKAQ…DRRGWFVTPE (69 aa)). The H-T-H motif DNA-binding region spans 36-55 (ERELCAIFNTTRITIRESLA).

This chain is Putative transcriptional regulator of 2-aminoethylphosphonate degradation operons (phnR), found in Salmonella typhi.